We begin with the raw amino-acid sequence, 300 residues long: 4-hydroxy-tetrahydrodipicolinate synthase (300 aa).

Threonine 56 is a binding site for pyruvate. Tyrosine 145 (proton donor/acceptor) is an active-site residue. Lysine 173 acts as the Schiff-base intermediate with substrate in catalysis. Valine 215 contacts pyruvate.

Belongs to the DapA family. As to quaternary structure, homotetramer; dimer of dimers.

The protein resides in the cytoplasm. The enzyme catalyses L-aspartate 4-semialdehyde + pyruvate = (2S,4S)-4-hydroxy-2,3,4,5-tetrahydrodipicolinate + H2O + H(+). It participates in amino-acid biosynthesis; L-lysine biosynthesis via DAP pathway; (S)-tetrahydrodipicolinate from L-aspartate: step 3/4. Its function is as follows. Catalyzes the condensation of (S)-aspartate-beta-semialdehyde [(S)-ASA] and pyruvate to 4-hydroxy-tetrahydrodipicolinate (HTPA). This chain is 4-hydroxy-tetrahydrodipicolinate synthase, found in Prochlorococcus marinus (strain MIT 9301).